A 396-amino-acid polypeptide reads, in one-letter code: Flap endonuclease 1 (396 aa).

Residues 1-104 are N-domain; that stretch reads MGIKHLYQLI…GELAKRFQRK (104 aa). Position 34 (aspartate 34) interacts with Mg(2+). Residues arginine 47 and arginine 70 each contribute to the DNA site. Mg(2+) is bound by residues aspartate 86, glutamate 158, glutamate 160, aspartate 179, and aspartate 181. Residues 122–255 form an I-domain region; that stretch reads DVEKFSRRTV…STALKLIRDH (134 aa). Residue glutamate 158 participates in DNA binding. DNA contacts are provided by glycine 233 and aspartate 235. Aspartate 235 provides a ligand contact to Mg(2+). The disordered stretch occupies residues 338 to 396; that stretch reads MKSAQQSRLEGFFKPVERTPEEKASLKRKADEKLSEKKKKQKEEAKAKKQAKSKPRTAG. The segment at 342–350 is interaction with PCNA; the sequence is QQSRLEGFF. The span at 352 to 384 shows a compositional bias: basic and acidic residues; sequence PVERTPEEKASLKRKADEKLSEKKKKQKEEAKA. The span at 385-396 shows a compositional bias: basic residues; it reads KKQAKSKPRTAG.

This sequence belongs to the XPG/RAD2 endonuclease family. FEN1 subfamily. In terms of assembly, interacts with PCNA. Three molecules of FEN1 bind to one PCNA trimer with each molecule binding to one PCNA monomer. PCNA stimulates the nuclease activity without altering cleavage specificity. It depends on Mg(2+) as a cofactor. Phosphorylated. Phosphorylation upon DNA damage induces relocalization to the nuclear plasma.

It is found in the nucleus. The protein resides in the nucleolus. It localises to the nucleoplasm. The protein localises to the mitochondrion. Its function is as follows. Structure-specific nuclease with 5'-flap endonuclease and 5'-3' exonuclease activities involved in DNA replication and repair. During DNA replication, cleaves the 5'-overhanging flap structure that is generated by displacement synthesis when DNA polymerase encounters the 5'-end of a downstream Okazaki fragment. It enters the flap from the 5'-end and then tracks to cleave the flap base, leaving a nick for ligation. Also involved in the long patch base excision repair (LP-BER) pathway, by cleaving within the apurinic/apyrimidinic (AP) site-terminated flap. Acts as a genome stabilization factor that prevents flaps from equilibrating into structures that lead to duplications and deletions. Also possesses 5'-3' exonuclease activity on nicked or gapped double-stranded DNA, and exhibits RNase H activity. Also involved in replication and repair of rDNA and in repairing mitochondrial DNA. This chain is Flap endonuclease 1, found in Phaeosphaeria nodorum (strain SN15 / ATCC MYA-4574 / FGSC 10173) (Glume blotch fungus).